The primary structure comprises 115 residues: NADH-ubiquinone oxidoreductase chain 3 (115 aa).

A run of 3 helical transmembrane segments spans residues 3-23 (LFVA…VAFW), 55-75 (FFLV…LLPL), and 84-104 (LSAM…GLIY).

The protein belongs to the complex I subunit 3 family. In terms of assembly, core subunit of respiratory chain NADH dehydrogenase (Complex I) which is composed of 45 different subunits. Interacts with TMEM186. Interacts with TMEM242.

It is found in the mitochondrion inner membrane. It carries out the reaction a ubiquinone + NADH + 5 H(+)(in) = a ubiquinol + NAD(+) + 4 H(+)(out). Its function is as follows. Core subunit of the mitochondrial membrane respiratory chain NADH dehydrogenase (Complex I) which catalyzes electron transfer from NADH through the respiratory chain, using ubiquinone as an electron acceptor. Essential for the catalytic activity of complex I. The sequence is that of NADH-ubiquinone oxidoreductase chain 3 from Sigmodon hispidus (Hispid cotton rat).